The following is a 276-amino-acid chain: MSELWYTEKQTKNFGITMKVNKTLHTEQTEFQHLEMVETEEFGNMLFLDGMVMTSEKDEFVYHEMVAHVPLFTHPNPEHVLVVGGGDGGVIREILKHPSVKKATLVDIDGKVIEYSKKFLPSIAGKLDDPRVDVQVDDGFMHIAKSENQYDVIMVDSTEPVGPAVNLFTKGFYAGIAKALKEDGIFVAQTDNPWFTPELITNVQRDVKEIFPITKLYTANIPTYPSGLWTFTIGSKKYDPLAVEDSRFFDIETKYYTKDIHKAAFVLPKFVSDLIK.

The region spanning 3–236 (ELWYTEKQTK…GLWTFTIGSK (234 aa)) is the PABS domain. Glutamine 32 is an S-methyl-5'-thioadenosine binding site. 2 residues coordinate spermidine: histidine 63 and aspartate 87. Residues aspartate 107 and 138-139 (DG) each bind S-methyl-5'-thioadenosine. The Proton acceptor role is filled by aspartate 156. A spermidine-binding site is contributed by 156–159 (DSTE). Proline 163 is a binding site for S-methyl-5'-thioadenosine.

Belongs to the spermidine/spermine synthase family. As to quaternary structure, homodimer or homotetramer.

The protein resides in the cytoplasm. It catalyses the reaction S-adenosyl 3-(methylsulfanyl)propylamine + putrescine = S-methyl-5'-thioadenosine + spermidine + H(+). The protein operates within amine and polyamine biosynthesis; spermidine biosynthesis; spermidine from putrescine: step 1/1. Functionally, involved in the cell growth and proliferation. Catalyzes the irreversible transfer of a propylamine group from the amino donor S-adenosylmethioninamine (decarboxy-AdoMet) to putrescine (1,4-diaminobutane) to yield spermidine. The chain is Polyamine aminopropyltransferase from Bacillus subtilis (strain 168).